The sequence spans 48 residues: Protein PsbN (48 aa).

The helical transmembrane segment at leucine 12–proline 34 threads the bilayer.

It belongs to the PsbN family.

Its subcellular location is the cellular thylakoid membrane. May play a role in photosystem I and II biogenesis. The chain is Protein PsbN from Prochlorococcus marinus (strain MIT 9313).